A 107-amino-acid polypeptide reads, in one-letter code: uncharacterized protein (107 aa).

2 consecutive transmembrane segments (helical) span residues 11-31 (CVNF…ILCI) and 58-78 (LFFL…LAFQ).

The protein resides in the mitochondrion membrane. This is an uncharacterized protein from Saccharomyces cerevisiae (strain ATCC 204508 / S288c) (Baker's yeast).